A 1173-amino-acid chain; its full sequence is Ubiquitin conjugation factor E4 B (1173 aa).

An N-acetylmethionine modification is found at methionine 1. Residues 1-155 (MEELSADEIR…EPSSGPEVSE (155 aa)) are disordered. The span at 16–33 (RLAGGQTSQPTTPLTSPQ) shows a compositional bias: low complexity. Residues serine 23 and serine 31 each carry the phosphoserine modification. Polar residues predominate over residues 51-64 (QSLGLNVHNMTPAT). A compositionally biased stretch (low complexity) spans 76–99 (SQSSEGVSSLSSSPSNSLETQSQS). Serine 84, serine 88, serine 90, serine 101, serine 103, serine 105, and serine 124 each carry phosphoserine. Over residues 134-147 (NDRREKRSLSDKEP) the composition is skewed to basic and acidic residues. Residues serine 238, serine 674, and serine 840 each carry the phosphoserine modification. The segment at 928-948 (NKEQWDQLPRDQQQARQSQLA) is disordered. Over residues 937–948 (RDQQQARQSQLA) the composition is skewed to low complexity. The U-box domain occupies 1098 to 1171 (DAPDEFRDPL…QAWMREKQSS (74 aa)). Serine 1136 bears the Phosphoserine mark.

It belongs to the ubiquitin conjugation factor E4 family. In terms of assembly, interacts with VCP. Interacts with STUB1/CHIP and UNC45B. Post-translationally, proteolytically cleaved by caspases during apoptosis. Cleaved efficiently at Asp-123 by caspase-6 and granzyme B. Cleaved with approximately 10-fold less efficiency at Asp-109 by caspase-3 and caspase-7. Expressed predominantly in neuronal tissues. Also detected in liver, heart, brain, kidney and testis.

The protein localises to the cytoplasm. The protein resides in the nucleus. The catalysed reaction is S-ubiquitinyl-[E2 ubiquitin-conjugating enzyme]-L-cysteine + [acceptor protein]-L-lysine = [E2 ubiquitin-conjugating enzyme]-L-cysteine + N(6)-ubiquitinyl-[acceptor protein]-L-lysine.. It functions in the pathway protein modification; protein ubiquitination. Ubiquitin-protein ligase that probably functions as an E3 ligase in conjunction with specific E1 and E2 ligases. May also function as an E4 ligase mediating the assembly of polyubiquitin chains on substrates ubiquitinated by another E3 ubiquitin ligase. May regulate myosin assembly in striated muscles together with STUB1 and VCP/p97 by targeting myosin chaperone UNC45B for proteasomal degradation. The protein is Ubiquitin conjugation factor E4 B of Mus musculus (Mouse).